A 317-amino-acid chain; its full sequence is MIMRFGYVSHAMALWDCSPAKTMTFTSFKKLSKQEREDKLYHVIRQNLEHTIRILHYNIAHEIPLYRLSSSIVPLATHPEVEFDYIGVFTPLWRKIGALIKEHNLRISFHPNQFTLFTSDKPHITTNAITDMTYHYKILDAIGIADSSYINIHVGGAYGNKEKAIERFHENIKKLPAHIKKQMTLENDDKTYTTSETLSICQKENIPFVFDYHHHMANLCEQPLEELLPAIFETWSHTNISPKVHISSPRSEKEFRAHAEYIDLEFIKPFLHVAKKNNHNFDIMIESKQKDLALFRLIDELSAIRGIKRISGAMLQW.

This sequence belongs to the uve1/UvsE family.

Functionally, component in a DNA repair pathway. Removal of UV LIGHT damaged nucleotides. Recognizes pyrimidine dimers and cleave a phosphodiester bond immediately 5' to the lesion. The protein is UV DNA damage endonuclease of Bacillus cereus (strain G9842).